Consider the following 209-residue polypeptide: Protocatechuate 3,4-dioxygenase alpha chain (209 aa).

Arginine 142 provides a ligand contact to 3,4-dihydroxybenzoate.

This sequence belongs to the intradiol ring-cleavage dioxygenase family. In terms of assembly, the enzyme is an oligomer of 12 copies of the alpha and beta chains. The cofactor is Fe(3+).

It catalyses the reaction 3,4-dihydroxybenzoate + O2 = 3-carboxy-cis,cis-muconate + 2 H(+). It participates in aromatic compound metabolism; beta-ketoadipate pathway; 3-carboxy-cis,cis-muconate from 3,4-dihydroxybenzoate: step 1/1. Plays an essential role in the utilization of numerous aromatic and hydroaromatic compounds via the beta-ketoadipate pathway. This chain is Protocatechuate 3,4-dioxygenase alpha chain (pcaG), found in Acinetobacter baylyi (strain ATCC 33305 / BD413 / ADP1).